A 416-amino-acid polypeptide reads, in one-letter code: Muscle-specific homeobox protein tinman (416 aa).

Polar residues-rich tracts occupy residues 1–11 (MLQHHQQQAQS) and 18–33 (YTQSPSPGSLTNADAL). Disordered regions lie at residues 1–33 (MLQHHQQQAQSGGYYDHYTQSPSPGSLTNADAL), 246–305 (TASN…RKPR), and 391–416 (VMWPPTMQQSQQQQQHHAQQQQMQHM). The span at 281-295 (NSISGNSNPGSNSGS) shows a compositional bias: low complexity. A DNA-binding region (homeobox) is located at residues 301–360 (KRKPRVLFSQAQVLELECRFRLKKYLTGAEREIIAQKLNLSATQVKIWFQNRRYKSKRGD). Residues 397–416 (MQQSQQQQQHHAQQQQMQHM) show a composition bias toward low complexity.

The protein localises to the nucleus. Functionally, required for the development of heart and visceral muscle; for the formation of somatic muscles. Has a crucial function in the early mesodermal subdivisions. The protein is Muscle-specific homeobox protein tinman (tin) of Drosophila melanogaster (Fruit fly).